The primary structure comprises 30 residues: Propionyl-CoA carboxylase alpha chain (30 aa).

One can recognise a Biotin carboxylation domain in the interval 1–30; the sequence is PKIRKVLVANRGEIAIRVMRTXKELGIATV.

In terms of assembly, dodecamer composed of six biotin-containing alpha subunits and six beta subunits. The cofactor is Mg(2+). Mn(2+) is required as a cofactor. It depends on biotin as a cofactor.

It carries out the reaction propanoyl-CoA + hydrogencarbonate + ATP = (S)-methylmalonyl-CoA + ADP + phosphate + H(+). It participates in metabolic intermediate metabolism; propanoyl-CoA degradation; succinyl-CoA from propanoyl-CoA: step 1/3. Its function is as follows. This is one of the 2 subunits of the biotin-dependent propionyl-CoA carboxylase (PCC), the enzyme catalyzing the carboxylation of propionyl-CoA/propanoyl-CoA to D-methylmalonyl-CoA/(S)-methylmalonyl-CoA. Within the holoenzyme, the alpha subunit catalyzes the ATP-dependent carboxylation of the biotin carried by the biotin carboxyl carrier (BCC) domain, while the beta subunit then transfers the carboxyl group from carboxylated biotin to propionyl-CoA. Propionyl-CoA carboxylase also carboxylates acetyl-CoA, butyryl-CoA and succinyl-CoA. The polypeptide is Propionyl-CoA carboxylase alpha chain (Myxococcus xanthus).